A 320-amino-acid chain; its full sequence is Methionyl-tRNA formyltransferase (320 aa).

Residue 114–117 coordinates (6S)-5,6,7,8-tetrahydrofolate; the sequence is SLLP.

The protein belongs to the Fmt family.

It carries out the reaction L-methionyl-tRNA(fMet) + (6R)-10-formyltetrahydrofolate = N-formyl-L-methionyl-tRNA(fMet) + (6S)-5,6,7,8-tetrahydrofolate + H(+). In terms of biological role, attaches a formyl group to the free amino group of methionyl-tRNA(fMet). The formyl group appears to play a dual role in the initiator identity of N-formylmethionyl-tRNA by promoting its recognition by IF2 and preventing the misappropriation of this tRNA by the elongation apparatus. This is Methionyl-tRNA formyltransferase from Acinetobacter baumannii (strain AB307-0294).